The sequence spans 376 residues: Alanine racemase (376 aa).

Residue Lys-40 is the Proton acceptor; specific for D-alanine of the active site. Lys-40 is subject to N6-(pyridoxal phosphate)lysine. Position 138 (Arg-138) interacts with substrate. Tyr-270 serves as the catalytic Proton acceptor; specific for L-alanine. Met-317 provides a ligand contact to substrate.

Belongs to the alanine racemase family. Pyridoxal 5'-phosphate is required as a cofactor.

It carries out the reaction L-alanine = D-alanine. It functions in the pathway amino-acid biosynthesis; D-alanine biosynthesis; D-alanine from L-alanine: step 1/1. Functionally, catalyzes the interconversion of L-alanine and D-alanine. May also act on other amino acids. The polypeptide is Alanine racemase (alr) (Lactobacillus delbrueckii subsp. bulgaricus (strain ATCC 11842 / DSM 20081 / BCRC 10696 / JCM 1002 / NBRC 13953 / NCIMB 11778 / NCTC 12712 / WDCM 00102 / Lb 14)).